An 81-amino-acid polypeptide reads, in one-letter code: uncharacterized protein (81 aa).

The protein to M.thermoautotrophicum MTH886.

This is an uncharacterized protein from Methanocaldococcus jannaschii (strain ATCC 43067 / DSM 2661 / JAL-1 / JCM 10045 / NBRC 100440) (Methanococcus jannaschii).